A 528-amino-acid chain; its full sequence is PC4 and SFRS1-interacting protein (528 aa).

A PWWP domain is found at 7–64 (PGDLIFAKMKGYPHWPARVDEVPDGAVKPPTNKLPIFFFGTHETAFLGPKDIFPYSEN). Residues 61 to 348 (YSENKEKYGK…EKKRETSMDS (288 aa)) are disordered. Lys75 participates in a covalent cross-link: Glycyl lysine isopeptide (Lys-Gly) (interchain with G-Cter in SUMO2). Polar residues predominate over residues 92 to 106 (FSSQQASTKQSNASS). Phosphoserine is present on residues Ser102, Ser105, and Ser106. Positions 113–135 (KETNVSKEDTDQEEKASNEDVTK) are enriched in basic and acidic residues. 2 positions are modified to phosphothreonine: Thr115 and Thr122. Phosphoserine is present on Ser129. At Thr141 the chain carries Phosphothreonine. Positions 144–153 (AARRGRKRKA) are enriched in basic residues. The short motif at 146-156 (RRGRKRKAEKQ) is the Nuclear localization signal element. Phosphoserine is present on residues Ser176 and Ser205. Positions 212–260 (DEDKSKKKGPEEKQPKKQLKKEEEGQKEEEKPRKEPDKKEGKKEVESKR) are enriched in basic and acidic residues. At Ser270 the chain carries Phosphoserine. The residue at position 271 (Thr271) is a Phosphothreonine. 2 positions are modified to phosphoserine: Ser272 and Ser274. Residues 285-300 (KRKGGRNFQAAHRRNM) are compositionally biased toward basic residues. A compositionally biased stretch (basic and acidic residues) spans 303–348 (GQHEKEAGDRKRKQEEQMETEQQNKDEGKKPEVKKVEKKRETSMDS). Coiled-coil stretches lie at residues 306 to 332 (EKEA…EGKK) and 369 to 393 (NRCI…KHTE). Residues 338 to 415 (VEKKRETSMD…VSQVIMEKST (78 aa)) are integrase-binding domain (IBD). Residue Ser432 is modified to Phosphoserine. Thr435 bears the Phosphothreonine mark. The residue at position 441 (Ser441) is a Phosphoserine. A compositionally biased stretch (basic and acidic residues) spans 444–471 (EQRQHEEANKTKDQGKKGPNKKLEKEPT). The interval 444–528 (EQRQHEEANK…ISLKESTLDN (85 aa)) is disordered. A compositionally biased stretch (polar residues) spans 472-492 (GTKSLNGGSDAQESNHPQHNG). Over residues 496–528 (EDGKDSREASSKTKPPGEEREAEISLKESTLDN) the composition is skewed to basic and acidic residues. Position 515 is a citrulline (Arg515). Ser520 bears the Phosphoserine mark. Thr525 bears the Phosphothreonine mark.

The protein belongs to the HDGF family. Monomer. Interacts with IFRD1/PC4. Interacts (via IBD domain) with POGZ (via IBM motif) and CDCA7L (via IBM motifs). Interacts (via IBD domain) with KMT2A (via IBM motifs) with a moderate affinity whereas interacts with the KMT2A-MEN1 complex with a greater affinity; MEN1 enhances interaction of KMT2A with PSIP1. Interacts (via IBD domain) with IWS1 (via IBM motif), MED1 (via IBM motif) and DBF4 (via IBM motifs). Post-translationally, citrullinated by PADI4.

It is found in the nucleus. In terms of biological role, transcriptional coactivator involved in neuroepithelial stem cell differentiation and neurogenesis. Involved in particular in lens epithelial cell gene regulation and stress responses. May play an important role in lens epithelial to fiber cell terminal differentiation. May play a protective role during stress-induced apoptosis. The chain is PC4 and SFRS1-interacting protein (Psip1) from Mus musculus (Mouse).